The chain runs to 208 residues: Small ribosomal subunit protein uS4 (208 aa).

The disordered stretch occupies residues 28–48; it reads YMERRPYGPGEHGRARKKQDS. An S4 RNA-binding domain is found at 95-160; it reads MRLDALVLRA…MPPFQVAAAG (66 aa).

It belongs to the universal ribosomal protein uS4 family. In terms of assembly, part of the 30S ribosomal subunit. Contacts protein S5. The interaction surface between S4 and S5 is involved in control of translational fidelity.

One of the primary rRNA binding proteins, it binds directly to 16S rRNA where it nucleates assembly of the body of the 30S subunit. In terms of biological role, with S5 and S12 plays an important role in translational accuracy. The protein is Small ribosomal subunit protein uS4 of Arthrobacter sp. (strain FB24).